Consider the following 541-residue polypeptide: Imidazole glycerol phosphate synthase hisHF (541 aa).

Residues 2 to 214 (IVSIVDYGSG…LTGNYEQPIS (213 aa)) enclose the Glutamine amidotransferase type-1 domain. Active-site for GATase activity residues include Cys80, His189, and Glu191. Residues 228–541 (LTKRIIACLD…LAIHDVLVRT (314 aa)) are cyclase. Catalysis depends on residues Asp237 and Asp396.

It in the C-terminal section; belongs to the HisA/HisF family.

The catalysed reaction is 5-[(5-phospho-1-deoxy-D-ribulos-1-ylimino)methylamino]-1-(5-phospho-beta-D-ribosyl)imidazole-4-carboxamide + L-glutamine = D-erythro-1-(imidazol-4-yl)glycerol 3-phosphate + 5-amino-1-(5-phospho-beta-D-ribosyl)imidazole-4-carboxamide + L-glutamate + H(+). It carries out the reaction L-glutamine + H2O = L-glutamate + NH4(+). Its pathway is amino-acid biosynthesis; L-histidine biosynthesis; L-histidine from 5-phospho-alpha-D-ribose 1-diphosphate: step 5/9. Its function is as follows. IGPS catalyzes the conversion of PRFAR and glutamine to IGP, AICAR and glutamate. The glutaminase domain produces the ammonia necessary for the cyclase domain to produce IGP and AICAR from PRFAR. The ammonia is channeled to the active site of the cyclase domain. The sequence is that of Imidazole glycerol phosphate synthase hisHF (his4) from Schizosaccharomyces pombe (strain 972 / ATCC 24843) (Fission yeast).